A 288-amino-acid polypeptide reads, in one-letter code: Nucleotide-binding protein Veis_1053 (288 aa).

An ATP-binding site is contributed by 10-17 (GMSGSGKS). Residue 59-62 (DVRS) coordinates GTP.

This sequence belongs to the RapZ-like family.

Its function is as follows. Displays ATPase and GTPase activities. This chain is Nucleotide-binding protein Veis_1053, found in Verminephrobacter eiseniae (strain EF01-2).